The following is a 556-amino-acid chain: Glucose-6-phosphate isomerase (556 aa).

The Proton donor role is filled by E360. Active-site residues include H391 and K519.

It belongs to the GPI family.

It is found in the cytoplasm. The catalysed reaction is alpha-D-glucose 6-phosphate = beta-D-fructose 6-phosphate. It participates in carbohydrate biosynthesis; gluconeogenesis. It functions in the pathway carbohydrate degradation; glycolysis; D-glyceraldehyde 3-phosphate and glycerone phosphate from D-glucose: step 2/4. Catalyzes the reversible isomerization of glucose-6-phosphate to fructose-6-phosphate. This Acinetobacter baumannii (strain ATCC 17978 / DSM 105126 / CIP 53.77 / LMG 1025 / NCDC KC755 / 5377) protein is Glucose-6-phosphate isomerase.